We begin with the raw amino-acid sequence, 119 residues long: Multi-drug resistance efflux pump PmrA homolog (119 aa).

4 helical membrane-spanning segments follow: residues 1–20, 22–42, 64–84, and 88–108; these read ILIGLVFTFVIYLPMAFVQS, LQLGILRFLLGFGAGALMPSV, MCSNLGMVTGPLVGSAIAGYI, and AAIVGTSLFVIVNIIWSFINF.

This sequence belongs to the major facilitator superfamily.

The protein localises to the cell membrane. In Lactococcus lactis subsp. cremoris (Streptococcus cremoris), this protein is Multi-drug resistance efflux pump PmrA homolog (pmrA).